A 357-amino-acid polypeptide reads, in one-letter code: Sulfate/thiosulfate import ATP-binding protein CysA (357 aa).

The ABC transporter domain maps to 3–237; it reads IQIQGVSKQY…PASPFVYDFL (235 aa). ATP is bound at residue 35 to 42; it reads GPSGSGKT.

Belongs to the ABC transporter superfamily. Sulfate/tungstate importer (TC 3.A.1.6) family. The complex is composed of two ATP-binding proteins (CysA), two transmembrane proteins (CysT and CysW) and a solute-binding protein (CysP).

It localises to the cell membrane. It carries out the reaction sulfate(out) + ATP + H2O = sulfate(in) + ADP + phosphate + H(+). The catalysed reaction is thiosulfate(out) + ATP + H2O = thiosulfate(in) + ADP + phosphate + H(+). Its function is as follows. Part of the ABC transporter complex CysAWTP involved in sulfate/thiosulfate import. Responsible for energy coupling to the transport system. The polypeptide is Sulfate/thiosulfate import ATP-binding protein CysA (Bacillus cereus (strain ATCC 14579 / DSM 31 / CCUG 7414 / JCM 2152 / NBRC 15305 / NCIMB 9373 / NCTC 2599 / NRRL B-3711)).